Consider the following 184-residue polypeptide: ATP synthase subunit b, chloroplastic (184 aa).

A helical membrane pass occupies residues 27–49; it reads LATNPINLSVVFGVLIFFGKGVL.

The protein belongs to the ATPase B chain family. In terms of assembly, F-type ATPases have 2 components, F(1) - the catalytic core - and F(0) - the membrane proton channel. F(1) has five subunits: alpha(3), beta(3), gamma(1), delta(1), epsilon(1). F(0) has four main subunits: a(1), b(1), b'(1) and c(10-14). The alpha and beta chains form an alternating ring which encloses part of the gamma chain. F(1) is attached to F(0) by a central stalk formed by the gamma and epsilon chains, while a peripheral stalk is formed by the delta, b and b' chains.

It is found in the plastid. The protein localises to the chloroplast thylakoid membrane. Its function is as follows. F(1)F(0) ATP synthase produces ATP from ADP in the presence of a proton or sodium gradient. F-type ATPases consist of two structural domains, F(1) containing the extramembraneous catalytic core and F(0) containing the membrane proton channel, linked together by a central stalk and a peripheral stalk. During catalysis, ATP synthesis in the catalytic domain of F(1) is coupled via a rotary mechanism of the central stalk subunits to proton translocation. In terms of biological role, component of the F(0) channel, it forms part of the peripheral stalk, linking F(1) to F(0). The sequence is that of ATP synthase subunit b, chloroplastic from Barbarea verna (Land cress).